The following is a 240-amino-acid chain: MAGHSKWKNIQRRKNAQDAKRGKIFMKLAKEIYVAAKEGGPDPESNASLRLVIDKAKNANMPNDNIDRAIKKASGSQDGKSYEEITYEGYGPSGVAVMVKCLTDNKNRTATSVRTAFSKNGGSLGETGCVSYMFDRKGYIAIEREDLEIDEEEFMLEVIDAGAEELETSEELFEIYTEPEQFEEVKKSLEERGYKLATSEITMVPQTYAEVDEALQEKVEKLIDVLEDDDDVQEVYTNVH.

Over residues 1 to 14 (MAGHSKWKNIQRRK) the composition is skewed to basic residues. The interval 1 to 21 (MAGHSKWKNIQRRKNAQDAKR) is disordered.

Belongs to the TACO1 family.

It localises to the cytoplasm. This chain is Probable transcriptional regulatory protein BLi02909/BL01150, found in Bacillus licheniformis (strain ATCC 14580 / DSM 13 / JCM 2505 / CCUG 7422 / NBRC 12200 / NCIMB 9375 / NCTC 10341 / NRRL NRS-1264 / Gibson 46).